The chain runs to 198 residues: Dynein light chain Tctex-type protein 2 (198 aa).

The segment at 1–34 (MEKRGRGVKSSPIQTPNQTPQQAPVTPRKERRPS) is disordered. The segment covering 11–24 (SPIQTPNQTPQQAP) has biased composition (polar residues).

It belongs to the dynein light chain Tctex-type family. Interacts with CCDC159. Interacts with CSNK2B. In terms of tissue distribution, expressed predominantly in testis. Also expressed in brain, lung and trachea.

The protein resides in the cytoplasm. The protein localises to the cytoskeleton. Its subcellular location is the cytoplasmic granule. It localises to the membrane. May be an accessory component of axonemal dynein and cytoplasmic dynein 1. Candidate for involvement in male sterility. The sequence is that of Dynein light chain Tctex-type protein 2 from Homo sapiens (Human).